A 247-amino-acid chain; its full sequence is Carboxy-S-adenosyl-L-methionine synthase (247 aa).

S-adenosyl-L-methionine-binding positions include Tyr-39, 64–66, 89–90, 117–118, Asn-132, and Arg-199; these read GCS, DN, and DI.

The protein belongs to the class I-like SAM-binding methyltransferase superfamily. Cx-SAM synthase family. As to quaternary structure, homodimer.

The catalysed reaction is prephenate + S-adenosyl-L-methionine = carboxy-S-adenosyl-L-methionine + 3-phenylpyruvate + H2O. Functionally, catalyzes the conversion of S-adenosyl-L-methionine (SAM) to carboxy-S-adenosyl-L-methionine (Cx-SAM). In Escherichia fergusonii (strain ATCC 35469 / DSM 13698 / CCUG 18766 / IAM 14443 / JCM 21226 / LMG 7866 / NBRC 102419 / NCTC 12128 / CDC 0568-73), this protein is Carboxy-S-adenosyl-L-methionine synthase.